The sequence spans 170 residues: Protein ripply3 (170 aa).

A WRPW motif motif is present at residues 40–43 (WRPW). The segment covering 51 to 61 (ELDGQQRRSGE) has biased composition (basic and acidic residues). Residues 51–78 (ELDGQQRRSGEADGVPTNTGPKGALGFQ) are disordered. The interval 79 to 114 (HPVRLYMPKSKTSEYLQHMGRKVLASFPVQATIHFY) is ripply homology domain. A compositionally biased stretch (polar residues) spans 142–155 (GVDSSRGSSDNYSV). A disordered region spans residues 142-170 (GVDSSRGSSDNYSVQGGPKRNIGSHAGSA).

The protein belongs to the ripply family. As to quaternary structure, interacts with tbx1 and tle4/grg4. As to expression, at neurula stage, expressed in the region close to the heart mesoderm. At the tailbud stage, expressed in the pharyngeal region.

It is found in the nucleus. In terms of biological role, acts as a transcriptional corepressor. Negative regulator of the transcriptional activity of tbx1 that plays a key role in pharyngeal development. Plays a role in the formation of the anteroposterior (AP) axis during embryonic development; required to establish the posterolateral border of the pre-placodal ectoderm (PPE) acting downstream of the retinoic acid receptor (RAR) signaling. In Xenopus laevis (African clawed frog), this protein is Protein ripply3 (ripply3).